We begin with the raw amino-acid sequence, 428 residues long: Serine--tRNA ligase (428 aa).

231 to 233 (TAE) is a binding site for L-serine. 262–264 (RSE) contributes to the ATP binding site. Glu285 provides a ligand contact to L-serine. An ATP-binding site is contributed by 349 to 352 (EISS). Residue Ser385 coordinates L-serine.

Belongs to the class-II aminoacyl-tRNA synthetase family. Type-1 seryl-tRNA synthetase subfamily. Homodimer. The tRNA molecule binds across the dimer.

It localises to the cytoplasm. It catalyses the reaction tRNA(Ser) + L-serine + ATP = L-seryl-tRNA(Ser) + AMP + diphosphate + H(+). The catalysed reaction is tRNA(Sec) + L-serine + ATP = L-seryl-tRNA(Sec) + AMP + diphosphate + H(+). It functions in the pathway aminoacyl-tRNA biosynthesis; selenocysteinyl-tRNA(Sec) biosynthesis; L-seryl-tRNA(Sec) from L-serine and tRNA(Sec): step 1/1. In terms of biological role, catalyzes the attachment of serine to tRNA(Ser). Is also able to aminoacylate tRNA(Sec) with serine, to form the misacylated tRNA L-seryl-tRNA(Sec), which will be further converted into selenocysteinyl-tRNA(Sec). The sequence is that of Serine--tRNA ligase from Staphylococcus carnosus (strain TM300).